The sequence spans 639 residues: uncharacterized protein (639 aa).

This is an uncharacterized protein from Mus musculus (Mouse).